The primary structure comprises 479 residues: BURP domain-containing protein 4 (479 aa).

The first 46 residues, 1–46 (MVGKGNECAAARRRFSLRAAAASSSSSSFLPCLLLAAALSAGCCRA), serve as a signal peptide directing secretion. The segment at 158–177 (RADGPPKQPATFPASPNGEK) is disordered. The BURP domain occupies 254-479 (LFLMKKLHPG…PQGYVLWLAN (226 aa)). N-linked (GlcNAc...) asparagine glycosylation is present at N445.

Expressed in stamen.

This is BURP domain-containing protein 4 (BURP4) from Oryza sativa subsp. japonica (Rice).